Reading from the N-terminus, the 280-residue chain is Hydroxyethylthiazole kinase (280 aa).

Methionine 58 contributes to the substrate binding site. Arginine 129 contributes to the ATP binding site. Residue alanine 206 coordinates substrate.

The protein belongs to the Thz kinase family. Requires Mg(2+) as cofactor.

The enzyme catalyses 5-(2-hydroxyethyl)-4-methylthiazole + ATP = 4-methyl-5-(2-phosphooxyethyl)-thiazole + ADP + H(+). It participates in cofactor biosynthesis; thiamine diphosphate biosynthesis; 4-methyl-5-(2-phosphoethyl)-thiazole from 5-(2-hydroxyethyl)-4-methylthiazole: step 1/1. Its function is as follows. Thiazole kinase involved in thiamine salvage pathway. The polypeptide is Hydroxyethylthiazole kinase (THIM) (Zea mays (Maize)).